The primary structure comprises 89 residues: Small ribosomal subunit protein uS19 (89 aa).

The protein belongs to the universal ribosomal protein uS19 family.

Protein S19 forms a complex with S13 that binds strongly to the 16S ribosomal RNA. The chain is Small ribosomal subunit protein uS19 from Porphyromonas gingivalis (strain ATCC 33277 / DSM 20709 / CIP 103683 / JCM 12257 / NCTC 11834 / 2561).